A 139-amino-acid chain; its full sequence is Glutamate mutase sigma subunit (139 aa).

The B12-binding domain maps to 4-139 (KIKLVLGVIG…DLHADFPDHA (136 aa)). Adenosylcob(III)alamin is bound by residues 14-18 (SDCHA), H17, 62-64 (SSL), and 94-98 (NIVVG).

It belongs to the methylaspartate mutase GlmS subunit family. Heterotetramer composed of 2 epsilon subunits (GlmE) and 2 sigma subunits (GlmS). GlmE exists as a homodimer and GlmS as a monomer. Adenosylcob(III)alamin is required as a cofactor.

The catalysed reaction is (2S,3S)-3-methyl-L-aspartate = L-glutamate. It participates in amino-acid degradation; L-glutamate degradation via mesaconate pathway; acetate and pyruvate from L-glutamate: step 1/4. Functionally, catalyzes the carbon skeleton rearrangement of L-glutamate to L-threo-3-methylaspartate ((2S,3S)-3-methylaspartate). The protein is Glutamate mutase sigma subunit of Treponema denticola (strain ATCC 35405 / DSM 14222 / CIP 103919 / JCM 8153 / KCTC 15104).